Here is a 336-residue protein sequence, read N- to C-terminus: uncharacterized protein (336 aa).

This is an uncharacterized protein from Alkalihalophilus pseudofirmus (strain ATCC BAA-2126 / JCM 17055 / OF4) (Bacillus pseudofirmus).